The following is a 472-amino-acid chain: 3-isopropylmalate dehydratase large subunit (472 aa).

[4Fe-4S] cluster is bound by residues Cys-347, Cys-409, and Cys-412.

This sequence belongs to the aconitase/IPM isomerase family. LeuC type 1 subfamily. Heterodimer of LeuC and LeuD. [4Fe-4S] cluster serves as cofactor.

It carries out the reaction (2R,3S)-3-isopropylmalate = (2S)-2-isopropylmalate. The protein operates within amino-acid biosynthesis; L-leucine biosynthesis; L-leucine from 3-methyl-2-oxobutanoate: step 2/4. Functionally, catalyzes the isomerization between 2-isopropylmalate and 3-isopropylmalate, via the formation of 2-isopropylmaleate. This chain is 3-isopropylmalate dehydratase large subunit, found in Salinibacter ruber (strain DSM 13855 / M31).